A 435-amino-acid chain; its full sequence is 5-methylthioadenosine/S-adenosylhomocysteine deaminase (435 aa).

2 residues coordinate Zn(2+): His65 and His67. Positions 94, 150, and 189 each coordinate substrate. Zn(2+) is bound at residue His216. Residues Glu219 and Asp304 each coordinate substrate. A Zn(2+)-binding site is contributed by Asp304.

The protein belongs to the metallo-dependent hydrolases superfamily. MTA/SAH deaminase family. Zn(2+) is required as a cofactor.

The catalysed reaction is S-adenosyl-L-homocysteine + H2O + H(+) = S-inosyl-L-homocysteine + NH4(+). The enzyme catalyses S-methyl-5'-thioadenosine + H2O + H(+) = S-methyl-5'-thioinosine + NH4(+). Functionally, catalyzes the deamination of 5-methylthioadenosine and S-adenosyl-L-homocysteine into 5-methylthioinosine and S-inosyl-L-homocysteine, respectively. Is also able to deaminate adenosine. The sequence is that of 5-methylthioadenosine/S-adenosylhomocysteine deaminase from Bacillus cereus (strain AH187).